The chain runs to 347 residues: NADH-quinone oxidoreductase subunit H 1 (347 aa).

9 helical membrane-spanning segments follow: residues 13–33 (IIMIGQSLLLLVCLLVFIAYV), 50–70 (PNVVGPFGLFQSFADLLKFVF), 82–102 (AVFLLAPLVTVLLALSTWAVV), 115–135 (VGILYIFAISSLEVYGIIMGG), 161–181 (IGFVIVTVLLCVGSLNLTDIV), 198–218 (FLDWHWLSLFPMFIVFFISAL), 263–283 (CALTTILFLGGWLPPVDIWIL), 286–306 (VPGIIWFTLKACLVFFMFAMV), and 321–341 (LGWKVFLPLSLAMVIIVAFVL).

This sequence belongs to the complex I subunit 1 family. As to quaternary structure, NDH-1 is composed of 14 different subunits. Subunits NuoA, H, J, K, L, M, N constitute the membrane sector of the complex.

It localises to the cell inner membrane. It catalyses the reaction a quinone + NADH + 5 H(+)(in) = a quinol + NAD(+) + 4 H(+)(out). Functionally, NDH-1 shuttles electrons from NADH, via FMN and iron-sulfur (Fe-S) centers, to quinones in the respiratory chain. The immediate electron acceptor for the enzyme in this species is believed to be ubiquinone. Couples the redox reaction to proton translocation (for every two electrons transferred, four hydrogen ions are translocated across the cytoplasmic membrane), and thus conserves the redox energy in a proton gradient. This subunit may bind ubiquinone. This chain is NADH-quinone oxidoreductase subunit H 1, found in Rhizobium etli (strain ATCC 51251 / DSM 11541 / JCM 21823 / NBRC 15573 / CFN 42).